A 937-amino-acid polypeptide reads, in one-letter code: Calsyntenin-2 (937 aa).

An N-terminal signal peptide occupies residues 1 to 22; sequence MKMRAITAMLLLVLSGQCGILA. The Extracellular segment spans residues 23-818; sequence GKVNKHKPWI…NSDHISGTPP (796 aa). Cadherin domains follow at residues 32-148 and 149-249; these read IETS…SPVF and REPL…KPGW. Asn-86 is a glycosylation site (N-linked (GlcNAc...) asparagine). Asn-330, Asn-365, and Asn-716 each carry an N-linked (GlcNAc...) asparagine glycan. Residues 819 to 839 form a helical membrane-spanning segment; it reads AATVVIVMCIAALVVIVVLGI. Residues 840–937 lie on the Cytoplasmic side of the membrane; that stretch reads YRIHTTHQDS…LEWDPSTLPY (98 aa). Residues 846–937 are disordered; the sequence is HQDSSKEDEE…LEWDPSTLPY (92 aa). Polar residues predominate over residues 865–874; sequence DNSNLNSIEG. 2 stretches are compositionally biased toward acidic residues: residues 881–900 and 907–917; these read VREE…DDLA and ESEDSDEDEET.

Belongs to the calsyntenin family. Homooligomer and heterooligomer; mediates both homophilic and heterophilc interactions with clstn1 and clstn3 paralogs via cadherin domains. By 48 hours post-fertilization (hpf), widely expressed in the brain, with strong expression in the telencephalon and the midbrain.

The protein resides in the postsynaptic cell membrane. It is found in the endoplasmic reticulum membrane. Its subcellular location is the golgi apparatus membrane. The protein localises to the cell projection. It localises to the dendrite. Functionally, postsynaptic adhesion molecule. Promotes synapse development by acting as a cell adhesion molecule at the postsynaptic membrane, which associates with presynaptic neurexins. This Danio rerio (Zebrafish) protein is Calsyntenin-2 (clstn2a).